A 983-amino-acid polypeptide reads, in one-letter code: Kinesin-like protein KIN-14I (983 aa).

Positions 44-166 (ASRRYEAANW…CVLAIKSYDE (123 aa)) constitute a Calponin-homology (CH) domain. 2 stretches are compositionally biased toward polar residues: residues 203 to 214 (SLSRTSSINNEK) and 278 to 287 (ESTSSQNNRS). Disordered stretches follow at residues 203–227 (SLSRTSSINNEKAPSENDSNKLSSP) and 276–295 (PRESTSSQNNRSFLKPLGER). Residues 399 to 724 (SIRVYCRVRP…LKFAERVATV (326 aa)) enclose the Kinesin motor domain. 481 to 488 (GQTGSGKT) is an ATP binding site. A coiled-coil region spans residues 731–758 (VNNDTSDVKELKEQIATLKAALARKEAE). Disordered regions lie at residues 802–824 (TVNSPPWPPVASPGQAYREDDRS) and 921–983 (TRSN…NARH). Polar residues predominate over residues 939–951 (SPQSRNNSNNTVS).

It belongs to the TRAFAC class myosin-kinesin ATPase superfamily. Kinesin family. KIN-14 subfamily.

This Arabidopsis thaliana (Mouse-ear cress) protein is Kinesin-like protein KIN-14I.